A 694-amino-acid chain; its full sequence is MDLHKQWENTETNWHKEKMELLDQFDNERKEWESQWKIMQKKIEELCREVKLWRKININESAKIIDLYHEKTIPEKVIESSPNYPDLGQSEFIRTNHKDGLRKENKREQSLVSGGNQMCKEQKATKKSKVGFLDPLATDNQKECEAWPDLRTSEEDSKSCSGALSTALEELAKVSEELCSFQEEIRKRSNHRRMKSDSFLQEMPNVTNIPHGDPMINNDQCILPISLEKEKQKNRKNLSCTNVLQSNSTKKCGIDTIDLKRNETPPVPPPRSTSRNFPSSDSEQAYERWKERLDHNSWVPHEGRSKRNYNPHFPLRQQEMSMLYPNEGKTSKDGIIFSSLVPEVKIDSKPPSNEDVGLSMWSCDIGIGAKRSPSTSWFQKTCSTPSNPKYEMVIPDHPAKSHPDLHVSNDCSSSVAESSSPLRNFSCGFERTTRNEKLAAKTDEFNRTVFRTDRNCQAIQQNHSCSKSSEDLKPCDTSSTHTGSISQSNDVSGIWKTNAHMPVPMENVPDNPTKKSTTGLVRQMQGHLSPRSYRNMLHEHDWRPSNLSGRPRSADPRSNYGVVEKLLKTYETATESALQNSKCFQDNWTKCNSDVSGGATLSQHLEMLQMEQQFQQKTAVWGGQEVKQGIDPKKITEESMSVNASHGKGFSRPARPANRRLPSRWASRSPSAPPALRRTTHNYTISLRSEALMV.

Positions 15–51 (HKEKMELLDQFDNERKEWESQWKIMQKKIEELCREVK) form a coiled coil. Disordered stretches follow at residues 259–286 (LKRN…EQAY), 461–490 (QNHS…QSND), and 643–680 (NASH…RRTT). Composition is skewed to polar residues over residues 272 to 283 (STSRNFPSSDSE) and 476 to 490 (DTSS…QSND). Residues 663–677 (SRWASRSPSAPPALR) are compositionally biased toward low complexity.

This is an uncharacterized protein from Homo sapiens (Human).